The sequence spans 237 residues: tRNA (guanine-N(1)-)-methyltransferase (237 aa).

Residues G112 and 132-137 (IGDFVL) contribute to the S-adenosyl-L-methionine site.

This sequence belongs to the RNA methyltransferase TrmD family. In terms of assembly, homodimer.

The protein resides in the cytoplasm. The enzyme catalyses guanosine(37) in tRNA + S-adenosyl-L-methionine = N(1)-methylguanosine(37) in tRNA + S-adenosyl-L-homocysteine + H(+). In terms of biological role, specifically methylates guanosine-37 in various tRNAs. This Thermosynechococcus vestitus (strain NIES-2133 / IAM M-273 / BP-1) protein is tRNA (guanine-N(1)-)-methyltransferase.